A 218-amino-acid polypeptide reads, in one-letter code: Small ribosomal subunit protein uS3c (218 aa).

A KH type-2 domain is found at 47–118 (VQKNMKTSSG…KLNIAITRIE (72 aa)).

It belongs to the universal ribosomal protein uS3 family. Part of the 30S ribosomal subunit.

The protein localises to the plastid. It localises to the chloroplast. This is Small ribosomal subunit protein uS3c (rps3) from Helianthus annuus (Common sunflower).